Consider the following 150-residue polypeptide: uncharacterized protein (150 aa).

This is an uncharacterized protein from Acidianus bottle-shaped virus (isolate Italy/Pozzuoli) (ABV).